The primary structure comprises 589 residues: MSVEKLIVDHMETWTSALQTRSTAGRGSSGKIDLYGIKKLRELILELAVRGKLVPQDPNDEPASELLKRIAAEKAELVKQGKIKKQKPLPEISEEEKPFELPDGWEWTTLTRIAEINPKIDVSDDEQEISFIPMPLISTKFDGSHEFEIKKWKDVKKGYTHFANGDIAIAKITPCFENSKAAIFSGLKNGIGVGTTELHVARPFSDIINRKYLLLNFKSPNFLKSGESQMTGSAGQKRVPRFFFENNPIPFPPLQEQERIIIRFTQLMSLCDQLEQQSLTSLDAHQQLVETLLGTLTDSQNVEELAENWARISEHFDTLFTTEASVDALKQTILQLAVMGKLVPQDPNDEPASELLKRIAQEKAQLVKEGKIKKQKPLPPISDEEKPFELPEGWEWCRLGSIYNFLNGYAFKSEWFTSVGLRLLRNANIAHGVTNWKDVVHIPNDMISDFENYILSENDIVISLDRPIINTGLKYAIISKSDLPCLLLQRVAKFKNYANTVSNSFLTIWLQSYFFINSIDPGRSNGVPHISTKQLEMTLFPLLPQSEQDRIISKMDELIQTCNKLKYIIKTAKQTQLHLADALTDAAIN.

This sequence belongs to the type-I restriction system S methylase family. In terms of assembly, the type I restriction/modification system is composed of three polypeptides R, M and S. The restriction enzyme has stoichiometry R(2)M(2)S(1) while the methyltransferase is M(2)S(1).

In terms of biological role, the specificity (S) subunit of a type I restriction enzyme; this subunit dictates DNA sequence specificity. The M and S subunits together form a methyltransferase (MTase) that methylates A-2 on the top strand and A-3 on the bottom strand of the sequence 5'-GAGN(7)GTCA-3'. In the presence of the R subunit the complex can also act as an endonuclease, binding to the same target sequence but cutting the DNA some distance from this site. Whether the DNA is cut or modified depends on the methylation state of the target sequence. When the target site is unmodified, the DNA is cut. When the target site is hemimethylated, the complex acts as a maintenance MTase modifying the DNA so that both strands become methylated. After locating a non-methylated recognition site, the enzyme complex serves as a molecular motor that translocates DNA in an ATP-dependent manner until a collision occurs that triggers cleavage. This chain is Type I restriction enzyme EcoAI specificity subunit, found in Escherichia coli.